We begin with the raw amino-acid sequence, 553 residues long: Heterochromatin protein 1-binding protein 3 (553 aa).

The residue at position 2 (A2) is an N-acetylalanine. A Phosphoserine modification is found at S6. Disordered regions lie at residues 29–134 and 140–159; these read KLGE…KTIP and SASQ…SPRP. Position 51 is a phosphothreonine (T51). The segment covering 60-71 has biased composition (acidic residues); it reads GEEEKPEPDISS. K64 is covalently cross-linked (Glycyl lysine isopeptide (Lys-Gly) (interchain with G-Cter in SUMO2)). T85 bears the Phosphothreonine mark. The segment covering 94-127 has biased composition (basic and acidic residues); it reads EQPKGEPENEEKEENKSSEETKKDEKDQSKEKEK. A Glycyl lysine isopeptide (Lys-Gly) (interchain with G-Cter in SUMO2) cross-link involves residue K97. Residues 140 to 154 are compositionally biased toward polar residues; that stretch reads SASQLARAQKQTPMA. Phosphoserine occurs at positions 142, 155, and 156. The 76-residue stretch at 157–232 folds into the H15 1 domain; sequence PRPKMDAILT…GASGSFVVVQ (76 aa). At K190 the chain carries N6-acetyllysine. Residues 230–255 are disordered; that stretch reads VVQKSRKTPQKSRNRKNRSSAVDPEP. Over residues 233–247 the composition is skewed to basic residues; it reads KSRKTPQKSRNRKNR. Phosphoserine is present on residues S248 and S249. Positions 255-259 match the PxVxL motif motif; it reads PQVKL. 2 consecutive H15 domains span residues 255 to 330 and 337 to 413; these read PQVK…QLKK and LGGS…QLCF. K258 participates in a covalent cross-link: Glycyl lysine isopeptide (Lys-Gly) (interchain with G-Cter in SUMO2). The interval 422–553 is disordered; the sequence is LFPKKEPDDS…TMKKSFRVKK (132 aa). Residues 430–450 are compositionally biased toward acidic residues; the sequence is DSRDEDEDEDESSEEDSEDEE. Phosphoserine occurs at positions 441, 442, and 446. Over residues 489-510 the composition is skewed to basic residues; that stretch reads GKARPLPKKAPPKAKTPAKKTR. Low complexity predominate over residues 517 to 527; that stretch reads KKPSGGSSKKP. Residues 543–553 show a composition bias toward basic residues; that stretch reads STMKKSFRVKK.

In terms of assembly, interacts (via PxVxL motif) with CBX5 (via Trp-174).

It localises to the nucleus. The protein resides in the chromosome. Its function is as follows. Component of heterochromatin that maintains heterochromatin integrity during G1/S progression and regulates the duration of G1 phase to critically influence cell proliferative capacity. Mediates chromatin condensation during hypoxia, leading to increased tumor cell viability, radio-resistance, chemo-resistance and self-renewal. The sequence is that of Heterochromatin protein 1-binding protein 3 (HP1BP3) from Homo sapiens (Human).